A 618-amino-acid polypeptide reads, in one-letter code: UvrABC system protein C (618 aa).

The region spanning 19 to 97 is the GIY-YIG domain; that stretch reads SEPGIYRMLD…IKALRPKYNV (79 aa). A UVR domain is found at 208–243; that stretch reads QIILDELAERMKNAVSQLNFEEAAVLRDQIKNLRLI.

It belongs to the UvrC family. As to quaternary structure, interacts with UvrB in an incision complex.

The protein resides in the cytoplasm. Its function is as follows. The UvrABC repair system catalyzes the recognition and processing of DNA lesions. UvrC both incises the 5' and 3' sides of the lesion. The N-terminal half is responsible for the 3' incision and the C-terminal half is responsible for the 5' incision. In Legionella pneumophila (strain Lens), this protein is UvrABC system protein C.